The chain runs to 415 residues: Arrestin red cell isoform 3 (415 aa).

Belongs to the arrestin family.

The protein resides in the cytoplasm. In Oncorhynchus mykiss (Rainbow trout), this protein is Arrestin red cell isoform 3.